A 185-amino-acid polypeptide reads, in one-letter code: RRM domain-containing protein ECU09_1470 (185 aa).

RRM domains follow at residues 8 to 87 and 101 to 170; these read NQLA…YAKR and KKVY…PAYE.

The polypeptide is RRM domain-containing protein ECU09_1470 (Encephalitozoon cuniculi (strain GB-M1) (Microsporidian parasite)).